Here is a 257-residue protein sequence, read N- to C-terminus: Undecaprenyl-diphosphatase (257 aa).

7 consecutive transmembrane segments (helical) span residues Tyr-42–Leu-62, Ile-76–Ile-96, Pro-103–Phe-123, Cys-136–Ala-156, Ile-172–Trp-192, Gln-209–Ile-229, and Trp-237–Met-257.

Belongs to the UppP family.

The protein resides in the cell inner membrane. The catalysed reaction is di-trans,octa-cis-undecaprenyl diphosphate + H2O = di-trans,octa-cis-undecaprenyl phosphate + phosphate + H(+). Catalyzes the dephosphorylation of undecaprenyl diphosphate (UPP). Confers resistance to bacitracin. The chain is Undecaprenyl-diphosphatase from Protochlamydia amoebophila (strain UWE25).